The chain runs to 405 residues: Tyrosine-protein phosphatase non-receptor type eak-6 (405 aa).

A Tyrosine-protein phosphatase domain is found at 30-309 (INQRINIIAD…SFIYDIIIKY (280 aa)). C248 (phosphocysteine intermediate) is an active-site residue.

Belongs to the protein-tyrosine phosphatase family. Expressed in the 2 embryonic head hypodermal cells XXXL/R.

Its subcellular location is the cytoplasm. The protein resides in the cell membrane. It catalyses the reaction O-phospho-L-tyrosyl-[protein] + H2O = L-tyrosyl-[protein] + phosphate. Functionally, putative phosphatase which, together with eak-4 and sdf-9, negatively regulates dauer larva formation downstream of insulin-like receptor daf-2 and in parallel of age-1, pdk-1 and akt-1. This is Tyrosine-protein phosphatase non-receptor type eak-6 from Caenorhabditis elegans.